A 584-amino-acid chain; its full sequence is 2-succinyl-5-enolpyruvyl-6-hydroxy-3-cyclohexene-1-carboxylate synthase (584 aa).

Positions 563–584 (TDAEASHRERERLADRVTGLSV) are disordered. A compositionally biased stretch (basic and acidic residues) spans 566–577 (EASHRERERLAD).

It belongs to the TPP enzyme family. MenD subfamily. As to quaternary structure, homodimer. The cofactor is Mg(2+). Requires Mn(2+) as cofactor. It depends on thiamine diphosphate as a cofactor.

It catalyses the reaction isochorismate + 2-oxoglutarate + H(+) = 5-enolpyruvoyl-6-hydroxy-2-succinyl-cyclohex-3-ene-1-carboxylate + CO2. It participates in quinol/quinone metabolism; 1,4-dihydroxy-2-naphthoate biosynthesis; 1,4-dihydroxy-2-naphthoate from chorismate: step 2/7. It functions in the pathway quinol/quinone metabolism; menaquinone biosynthesis. In terms of biological role, catalyzes the thiamine diphosphate-dependent decarboxylation of 2-oxoglutarate and the subsequent addition of the resulting succinic semialdehyde-thiamine pyrophosphate anion to isochorismate to yield 2-succinyl-5-enolpyruvyl-6-hydroxy-3-cyclohexene-1-carboxylate (SEPHCHC). This chain is 2-succinyl-5-enolpyruvyl-6-hydroxy-3-cyclohexene-1-carboxylate synthase, found in Halobacterium salinarum (strain ATCC 29341 / DSM 671 / R1).